We begin with the raw amino-acid sequence, 275 residues long: 3-methyl-2-oxobutanoate hydroxymethyltransferase (275 aa).

Mg(2+) contacts are provided by Asp49 and Asp88. 3-methyl-2-oxobutanoate contacts are provided by residues 49 to 50, Asp88, and Lys118; that span reads DS. A Mg(2+)-binding site is contributed by Glu120. The active-site Proton acceptor is the Glu187.

Belongs to the PanB family. As to quaternary structure, homodecamer; pentamer of dimers. It depends on Mg(2+) as a cofactor.

The protein resides in the cytoplasm. The enzyme catalyses 3-methyl-2-oxobutanoate + (6R)-5,10-methylene-5,6,7,8-tetrahydrofolate + H2O = 2-dehydropantoate + (6S)-5,6,7,8-tetrahydrofolate. It functions in the pathway cofactor biosynthesis; (R)-pantothenate biosynthesis; (R)-pantoate from 3-methyl-2-oxobutanoate: step 1/2. Functionally, catalyzes the reversible reaction in which hydroxymethyl group from 5,10-methylenetetrahydrofolate is transferred onto alpha-ketoisovalerate to form ketopantoate. The protein is 3-methyl-2-oxobutanoate hydroxymethyltransferase of Bartonella henselae (strain ATCC 49882 / DSM 28221 / CCUG 30454 / Houston 1) (Rochalimaea henselae).